The sequence spans 332 residues: 2,3-diketo-L-gulonate reductase (332 aa).

H44 functions as the Proton donor in the catalytic mechanism. Residues I168–S174, W224–K225, and G304–E306 contribute to the NAD(+) site.

Belongs to the LDH2/MDH2 oxidoreductase family. DlgD subfamily. In terms of assembly, homodimer.

Its subcellular location is the cytoplasm. The enzyme catalyses 3-dehydro-L-gulonate + NAD(+) = 2,3-dioxo-L-gulonate + NADH + H(+). It carries out the reaction 3-dehydro-L-gulonate + NADP(+) = 2,3-dioxo-L-gulonate + NADPH + H(+). In terms of biological role, catalyzes the reduction of 2,3-diketo-L-gulonate in the presence of NADH, to form 3-keto-L-gulonate. This Escherichia coli (strain SMS-3-5 / SECEC) protein is 2,3-diketo-L-gulonate reductase.